Consider the following 319-residue polypeptide: Protein sprouty homolog 1 (319 aa).

Met1 bears the N-acetylmethionine mark. Disordered stretches follow at residues 54 to 78 (TEGPSVVKRPAPRTAPRQEKHERTH) and 100 to 160 (AVLP…QPKQ). Residues 69 to 78 (PRQEKHERTH) are compositionally biased toward basic and acidic residues. The span at 112-131 (SRSTSTGSAASSGSNSSASS) shows a compositional bias: low complexity. Positions 183 to 295 (QCGKCKCGEC…CYDWIHRPGC (113 aa)) constitute an SPR domain.

Belongs to the sprouty family. In terms of assembly, forms heterodimers with SPRY2. Interacts with TESK1. Interacts with CAV1 (via C-terminus).

The protein localises to the cytoplasm. The protein resides in the membrane. In terms of biological role, inhibits fibroblast growth factor (FGF)-induced retinal lens fiber differentiation, probably by inhibiting FGF-mediated phosphorylation of ERK1/2. Inhibits TGFB-induced epithelial-to-mesenchymal transition in lens epithelial cells. The protein is Protein sprouty homolog 1 (SPRY1) of Homo sapiens (Human).